We begin with the raw amino-acid sequence, 474 residues long: Glutamine synthetase (474 aa).

Residues 14-99 (EKIELIDLKF…VCSIKEPRTG (86 aa)) enclose the GS beta-grasp domain. Positions 106 to 474 (PRVIAQKAID…PYEFSIYYDV (369 aa)) constitute a GS catalytic domain. Mg(2+)-binding residues include Glu131 and Glu133. Glu211 lines the ATP pocket. Glu216 and Glu224 together coordinate Mg(2+). Residues 268–269 (NG) and Gly269 each bind L-glutamate. His273 lines the Mg(2+) pocket. ATP-binding positions include 275 to 277 (HQS) and Ser277. Positions 325, 331, and 343 each coordinate L-glutamate. 3 residues coordinate ATP: Arg343, Arg348, and Lys357. Glu362 is a Mg(2+) binding site. Arg364 serves as a coordination point for L-glutamate. O-AMP-tyrosine is present on Tyr402.

Belongs to the glutamine synthetase family. Oligomer of 12 subunits arranged in the form of two hexagons. Requires Mg(2+) as cofactor.

The protein resides in the cytoplasm. It carries out the reaction L-glutamate + NH4(+) + ATP = L-glutamine + ADP + phosphate + H(+). The activity of this enzyme could be controlled by adenylation under conditions of abundant glutamine. In terms of biological role, involved in nitrogen metabolism via ammonium assimilation. Catalyzes the ATP-dependent biosynthesis of glutamine from glutamate and ammonia. This is Glutamine synthetase from Nostoc sp. (strain PCC 7120 / SAG 25.82 / UTEX 2576).